We begin with the raw amino-acid sequence, 53 residues long: Metallocarboxypeptidase inhibitor b (53 aa).

3 disulfides stabilise this stretch: C9–C23, C15–C51, and C27–C38. A53 is a binding site for Zn(2+).

In terms of biological role, metallocarboxypeptidase inhibitor. Has an inhibitory effect on bovine CPA1 and porcine CPB1. Does not inhibit D.melanogaster svr (carboxypeptidase D). Shows no activity against serine proteases subtilisin or bovine trypsin, cysteine protease papain, and aspartyl protease porcine pepsin. This Nerita versicolor (Four-tooth nerite) protein is Metallocarboxypeptidase inhibitor b.